The sequence spans 230 residues: Somatolactin (230 aa).

The first 23 residues, Met1–Ser23, serve as a signal peptide directing secretion. Disulfide bonds link Cys28–Cys38, Cys88–Cys204, and Cys221–Cys229. N-linked (GlcNAc...) asparagine glycosylation is found at Asn34 and Asn144.

The protein belongs to the somatotropin/prolactin family. As to expression, pituitary gland.

It is found in the secreted. This chain is Somatolactin, found in Solea senegalensis (Senegalese sole).